A 37-amino-acid chain; its full sequence is Large ribosomal subunit protein bL36 (37 aa).

Belongs to the bacterial ribosomal protein bL36 family.

The sequence is that of Large ribosomal subunit protein bL36 from Brevibacillus brevis (strain 47 / JCM 6285 / NBRC 100599).